The chain runs to 212 residues: Inactive ribonuclease-like protein 10 (212 aa).

The N-terminal stretch at 1-24 (MKVTLVHLLFMMLLLLLGLGVGLG) is a signal peptide. N-linked (GlcNAc...) asparagine glycosylation is found at Asn-129 and Asn-204.

The protein belongs to the pancreatic ribonuclease family. The N-terminus is blocked. Glycosylated. Male-specific expression in proximal caput of the epididymis.

It is found in the secreted. Its function is as follows. Secreted proximal epididymal protein required for post-testicular sperm maturation and male fertility. May be involved in sperm adhesion to the egg zona pellucida. Does not have ribonuclease activity. The polypeptide is Inactive ribonuclease-like protein 10 (Rnase10) (Rattus norvegicus (Rat)).